Consider the following 358-residue polypeptide: Protein SRG1 (358 aa).

The region spanning 209–309 (SVQSMRMNYY…RLSIATFHNV (101 aa)) is the Fe2OG dioxygenase domain. Positions 233, 235, and 290 each coordinate Fe cation.

This sequence belongs to the iron/ascorbate-dependent oxidoreductase family. Low expression in roots and leaves.

The chain is Protein SRG1 (SRG1) from Arabidopsis thaliana (Mouse-ear cress).